Consider the following 463-residue polypeptide: Type IV secretion system protein PtlD homolog (463 aa).

A signal peptide spans 1–24; that stretch reads MAGLSRILLSCTLACLLAGQAAQA. A run of 5 helical transmembrane segments spans residues 118 to 138, 232 to 252, 253 to 273, 294 to 314, and 333 to 353; these read LQPLVYSMMTLLVLLTGYALL, WLLCAMIVATSAGGWLCLAAS, LLIVPGLIVTLLLSLGPLFLV, ALVFMALGTPAVGLLSDVLAG, and MLAATLCATATLMLLTLVPLA. Positions 376 to 410 are enriched in low complexity; the sequence is AHRQAAARQYAPRPAAAAAAAGPHQAGTYAASATP. A disordered region spans residues 376 to 463; the sequence is AHRQAAARQY…RVLPRKPNLP (88 aa). Pro residues predominate over residues 411-420; it reads APAPARPAPS. The segment covering 441–455 has biased composition (basic and acidic residues); that stretch reads VRRDDRPAPAPDRRV.

Its subcellular location is the cell membrane. The protein is Type IV secretion system protein PtlD homolog (ptlD) of Bordetella parapertussis (strain 12822 / ATCC BAA-587 / NCTC 13253).